Here is an 811-residue protein sequence, read N- to C-terminus: Glycerol-3-phosphate acyltransferase (811 aa).

Residues 303–308 (HRSHMD) carry the HXXXXD motif motif.

This sequence belongs to the GPAT/DAPAT family.

Its subcellular location is the cell inner membrane. The enzyme catalyses sn-glycerol 3-phosphate + an acyl-CoA = a 1-acyl-sn-glycero-3-phosphate + CoA. It functions in the pathway phospholipid metabolism; CDP-diacylglycerol biosynthesis; CDP-diacylglycerol from sn-glycerol 3-phosphate: step 1/3. This chain is Glycerol-3-phosphate acyltransferase, found in Haemophilus ducreyi (strain 35000HP / ATCC 700724).